The following is a 717-amino-acid chain: MRKILKLKVGREDLILETGLLAKQANGAVLATYGGSTVLATVCCSDSARENLDFVPLSVEYNEKYYAAGKIPGGFIKREGKPKDKEVLVSRLIDRPMRPLFDKRFGREIQVVPTTLSTDQMNPPDIVGMNAAFAAVFLSDIPFNGPIAAVRIAYLNSEFIVNPSFDEIQDSILDIVVAGSLDGITMVEGGANEVSEEVLLAAIDQAYEYIKQICNLQKEFILIVGEREKLPLAYEERVFEFKAELKDFIYSELKDACFVKGKLNRDKAIKLVKQKAYEHFSSVSQVDEENETLFYKALDDFEQEIVRRSILENNLRTDGRNPTQIRDIVAEVDLLRRTHGSALFTRGETQALAVTTLGTSIDEQIMDDIDGDKRLNFMLHYNFPPFSVGETGRLMTGRREIGHGHLAQRSLEAMLPKKDDFPYTIRVVSEILESNGSSSMATVCSGSMSLMAAGVPVKEQVAGIAMGLVSEGDKYVILSDILGEEDHLGDMDFKVAGTKNGITGFQMDIKISNVTKQLMKDALAQARIGRMHILSIMDSVISRSRDDISVNAPKIIQLQIDIDKISLVIGSTGKTVKAITDEFEVRVQIEQDGRITLFGTDSLKMQKAKARIESIVREPKIGEIYEGVVKKINSFGAFIELTPTKEGFLSNRPKSRDDRYGDMRHSRYGSGRHSRYGRDSRNTFAMRPPRLEEGQMVKVRISDIDKFGKIELELVRD.

Mg(2+) is bound by residues aspartate 486 and aspartate 492. The KH domain occupies 553–612 (PKIIQLQIDIDKISLVIGSTGKTVKAITDEFEVRVQIEQDGRITLFGTDSLKMQKAKARI). The 94-residue stretch at 622 to 715 (GEIYEGVVKK…KFGKIELELV (94 aa)) folds into the S1 motif domain. The disordered stretch occupies residues 650–683 (SNRPKSRDDRYGDMRHSRYGSGRHSRYGRDSRNT). The segment covering 654–665 (KSRDDRYGDMRH) has biased composition (basic and acidic residues). Residues 666-675 (SRYGSGRHSR) are compositionally biased toward basic residues.

Belongs to the polyribonucleotide nucleotidyltransferase family. The cofactor is Mg(2+).

It localises to the cytoplasm. It carries out the reaction RNA(n+1) + phosphate = RNA(n) + a ribonucleoside 5'-diphosphate. Its function is as follows. Involved in mRNA degradation. Catalyzes the phosphorolysis of single-stranded polyribonucleotides processively in the 3'- to 5'-direction. The protein is Polyribonucleotide nucleotidyltransferase of Borrelia turicatae (strain 91E135).